Reading from the N-terminus, the 536-residue chain is Phosphoenolpyruvate carboxykinase (ATP) (536 aa).

Substrate contacts are provided by R61, Y195, and K201. ATP-binding positions include K201, H220, and 236–244; that span reads GLSGTGKTT. Residues K201 and H220 each coordinate Mn(2+). D257 contributes to the Mn(2+) binding site. ATP contacts are provided by E285, R322, and T447. R322 contacts substrate.

It belongs to the phosphoenolpyruvate carboxykinase (ATP) family. Mn(2+) is required as a cofactor.

It is found in the cytoplasm. The enzyme catalyses oxaloacetate + ATP = phosphoenolpyruvate + ADP + CO2. The protein operates within carbohydrate biosynthesis; gluconeogenesis. Involved in the gluconeogenesis. Catalyzes the conversion of oxaloacetate (OAA) to phosphoenolpyruvate (PEP) through direct phosphoryl transfer between the nucleoside triphosphate and OAA. The polypeptide is Phosphoenolpyruvate carboxykinase (ATP) (Rhizobium johnstonii (strain DSM 114642 / LMG 32736 / 3841) (Rhizobium leguminosarum bv. viciae)).